A 292-amino-acid polypeptide reads, in one-letter code: Elongation factor Ts (292 aa).

Residues 82 to 85 (TDFV) are involved in Mg(2+) ion dislocation from EF-Tu.

It belongs to the EF-Ts family.

Its subcellular location is the cytoplasm. Associates with the EF-Tu.GDP complex and induces the exchange of GDP to GTP. It remains bound to the aminoacyl-tRNA.EF-Tu.GTP complex up to the GTP hydrolysis stage on the ribosome. This Bordetella bronchiseptica (strain ATCC BAA-588 / NCTC 13252 / RB50) (Alcaligenes bronchisepticus) protein is Elongation factor Ts.